Consider the following 194-residue polypeptide: MIGLRPAFSTMLFLLLLTGGVYPLLTTALGQWWFPWQANGSLIHKDNVIRGSALIGQSFTAAGYFHGRPSATADTPYNPLASGGSNLAASNPELDAQIQARVAALRAANPQASSAVPVELATASASGLDNNLTPGAAAWQIPRVAAARQLPVEQVAQLVAEYTHRPLASFLGQPVVNIVKLNLALDALQGHRAK.

A helical membrane pass occupies residues 12–34; sequence LFLLLLTGGVYPLLTTALGQWWF.

This sequence belongs to the KdpC family. As to quaternary structure, the system is composed of three essential subunits: KdpA, KdpB and KdpC.

It is found in the cell inner membrane. In terms of biological role, part of the high-affinity ATP-driven potassium transport (or Kdp) system, which catalyzes the hydrolysis of ATP coupled with the electrogenic transport of potassium into the cytoplasm. This subunit acts as a catalytic chaperone that increases the ATP-binding affinity of the ATP-hydrolyzing subunit KdpB by the formation of a transient KdpB/KdpC/ATP ternary complex. The polypeptide is Potassium-transporting ATPase KdpC subunit (Salmonella schwarzengrund (strain CVM19633)).